A 278-amino-acid chain; its full sequence is Biotin synthase (278 aa).

A Radical SAM core domain is found at 1–227 (MQIMLCAISN…QSVVMVAGGR (227 aa)). [4Fe-4S] cluster is bound by residues C16, C20, and C23. Positions 60, 95, and 153 each coordinate [2Fe-2S] cluster.

This sequence belongs to the radical SAM superfamily. Biotin synthase family. In terms of assembly, homodimer. Requires [4Fe-4S] cluster as cofactor. [2Fe-2S] cluster serves as cofactor.

It carries out the reaction (4R,5S)-dethiobiotin + (sulfur carrier)-SH + 2 reduced [2Fe-2S]-[ferredoxin] + 2 S-adenosyl-L-methionine = (sulfur carrier)-H + biotin + 2 5'-deoxyadenosine + 2 L-methionine + 2 oxidized [2Fe-2S]-[ferredoxin]. It functions in the pathway cofactor biosynthesis; biotin biosynthesis; biotin from 7,8-diaminononanoate: step 2/2. Its function is as follows. Catalyzes the conversion of dethiobiotin (DTB) to biotin by the insertion of a sulfur atom into dethiobiotin via a radical-based mechanism. The polypeptide is Biotin synthase (Campylobacter jejuni (strain RM1221)).